A 122-amino-acid chain; its full sequence is Acidic phospholipase A2 A' (122 aa).

Disulfide bonds link C26–C115, C28–C44, C43–C95, C49–C122, C50–C88, C57–C81, and C75–C86. Ca(2+) contacts are provided by Y27, G29, and G31. Residue H47 is part of the active site. D48 is a Ca(2+) binding site. D89 is a catalytic residue.

The protein belongs to the phospholipase A2 family. Group II subfamily. D49 sub-subfamily. Requires Ca(2+) as cofactor. In terms of tissue distribution, expressed by the venom gland.

The protein resides in the secreted. It carries out the reaction a 1,2-diacyl-sn-glycero-3-phosphocholine + H2O = a 1-acyl-sn-glycero-3-phosphocholine + a fatty acid + H(+). Functionally, PLA2 catalyzes the calcium-dependent hydrolysis of the 2-acyl groups in 3-sn-phosphoglycerides. The polypeptide is Acidic phospholipase A2 A' (Gloydius halys (Chinese water mocassin)).